The chain runs to 101 residues: Large ribosomal subunit protein bL28 (101 aa).

It belongs to the bacterial ribosomal protein bL28 family.

The polypeptide is Large ribosomal subunit protein bL28 (Rhodopseudomonas palustris (strain BisB5)).